The following is a 186-amino-acid chain: Transposon Tn21 resolvase (186 aa).

The Resolvase/invertase-type recombinase catalytic domain maps to 4-137; the sequence is QRIGYIRVST…EGIALAKQRG (134 aa). Catalysis depends on Ser12, which acts as the O-(5'-phospho-DNA)-serine intermediate. The H-T-H motif DNA-binding region spans 164–183; sequence KTKLAREFGISRETLYQYLR.

It belongs to the site-specific recombinase resolvase family.

Resolvase catalyzes the resolution (a site-specific recombination) of the cointegrated replicon to yield the final transposition products. The sequence is that of Transposon Tn21 resolvase (tnpR) from Escherichia coli.